The chain runs to 81 residues: Sulfur carrier protein TusA (81 aa).

The active-site Cysteine persulfide intermediate is Cys-19.

The protein belongs to the sulfur carrier protein TusA family. Interacts with IscS.

Its subcellular location is the cytoplasm. The protein operates within tRNA modification. Functionally, sulfur carrier protein involved in sulfur trafficking in the cell. Part of a sulfur-relay system required for 2-thiolation during synthesis of 2-thiouridine of the modified wobble base 5-methylaminomethyl-2-thiouridine (mnm(5)s(2)U) in tRNA. Interacts with IscS and stimulates its cysteine desulfurase activity. Accepts an activated sulfur from IscS, which is then transferred to TusD, and thus determines the direction of sulfur flow from IscS to 2-thiouridine formation. Also appears to be involved in sulfur transfer for the biosynthesis of molybdopterin. The polypeptide is Sulfur carrier protein TusA (Shigella boydii serotype 18 (strain CDC 3083-94 / BS512)).